A 307-amino-acid polypeptide reads, in one-letter code: N-acetylmuramic acid 6-phosphate etherase 2 (307 aa).

Residues 62–225 form the SIS domain; the sequence is ITAAFKQGGR…TTASMIRLGK (164 aa). The active-site Proton donor is Glu-90. Residue Glu-121 is part of the active site.

The protein belongs to the GCKR-like family. MurNAc-6-P etherase subfamily. As to quaternary structure, homodimer.

It carries out the reaction N-acetyl-D-muramate 6-phosphate + H2O = N-acetyl-D-glucosamine 6-phosphate + (R)-lactate. It functions in the pathway amino-sugar metabolism; 1,6-anhydro-N-acetylmuramate degradation. Its pathway is amino-sugar metabolism; N-acetylmuramate degradation. The protein operates within cell wall biogenesis; peptidoglycan recycling. Functionally, specifically catalyzes the cleavage of the D-lactyl ether substituent of MurNAc 6-phosphate, producing GlcNAc 6-phosphate and D-lactate. Together with AnmK, is also required for the utilization of anhydro-N-acetylmuramic acid (anhMurNAc) either imported from the medium or derived from its own cell wall murein, and thus plays a role in cell wall recycling. The sequence is that of N-acetylmuramic acid 6-phosphate etherase 2 from Vibrio cholerae serotype O1 (strain ATCC 39315 / El Tor Inaba N16961).